The following is a 63-amino-acid chain: Arabinogalactan protein 41 (63 aa).

Positions 1-27 (MSGSRLFFGVSTIVSIIFAILLPMAHA) are cleaved as a signal peptide. The residue at position 28 (Gln-28) is a Pyrrolidone carboxylic acid. 4-hydroxyproline occurs at positions 32, 34, and 36. 3 O-linked (Ara...) hydroxyproline glycosylation sites follow: Pro-32, Pro-34, and Pro-36. Ser-38 is lipidated: GPI-anchor amidated serine. A propeptide spans 39-63 (DGTTIDQGIAYVLMLVALVLTYLIH) (removed in mature form).

It belongs to the AG-peptide AGP family. Post-translationally, contains 4-hydroxyproline; hydroxylated on Pro-32, Pro-34 and Pro-36. In terms of processing, O-glycosylated on hydroxyprolines; noncontiguous hydroxylproline residues are glycosylated with arabinogalactan.

It localises to the cell membrane. Functionally, proteoglycan that seems to be implicated in diverse developmental roles such as differentiation, cell-cell recognition, embryogenesis and programmed cell death. The polypeptide is Arabinogalactan protein 41 (Arabidopsis thaliana (Mouse-ear cress)).